A 209-amino-acid chain; its full sequence is Pyrrolidone-carboxylate peptidase (209 aa).

Catalysis depends on residues glutamate 79, cysteine 142, and histidine 164.

Belongs to the peptidase C15 family. Homotetramer.

The protein localises to the cytoplasm. It carries out the reaction Release of an N-terminal pyroglutamyl group from a polypeptide, the second amino acid generally not being Pro.. Removes 5-oxoproline from various penultimate amino acid residues except L-proline. The polypeptide is Pyrrolidone-carboxylate peptidase (Saccharolobus islandicus (strain Y.N.15.51 / Yellowstone #2) (Sulfolobus islandicus)).